The chain runs to 318 residues: uncharacterized protein (318 aa).

It belongs to the glycosyltransferase 2 family.

This is an uncharacterized protein from Rickettsia prowazekii (strain Madrid E).